We begin with the raw amino-acid sequence, 733 residues long: Photosystem I P700 chlorophyll a apoprotein A2 (733 aa).

8 helical membrane passes run 46 to 69 (IFASHFGQLAIIFLWTSGNLFHVA), 135 to 158 (LYNGSLFLLFVAGLFLFAGWLHLQ), 175 to 199 (LNHHLSGLFGVSSLAWTGHLVHVAI), 273 to 291 (MAHHHLAIAVVFIIAGHQY), 330 to 353 (LHFQLGLALASVGVLCSLTAQHMY), 369 to 395 (AALYSHHQYIAGFIMCGAFAHGAIFFI), 417 to 439 (AIISHLSWVSLFLGFHTLGLYVH), and 516 to 534 (FLVHHAIALGLHTTTLILV). Residues cysteine 558 and cysteine 567 each contribute to the [4Fe-4S] cluster site. Helical transmembrane passes span 574 to 595 (AFYLAVFWELNTVSWTVFYFHW) and 642 to 664 (LSVWAWMFLFGHLIYATGFMFLI). Residues histidine 653, methionine 661, and tyrosine 669 each contribute to the chlorophyll a site. Tryptophan 670 lines the phylloquinone pocket. Residues 706–726 (LVGLTHFAVGFVLTYAAFVIA) traverse the membrane as a helical segment.

The protein belongs to the PsaA/PsaB family. As to quaternary structure, the PsaA/B heterodimer binds the P700 chlorophyll special pair and subsequent electron acceptors. PSI consists of a core antenna complex that captures photons, and an electron transfer chain that converts photonic excitation into a charge separation. The eukaryotic PSI reaction center is composed of at least 11 subunits. P700 is a chlorophyll a/chlorophyll a' dimer, A0 is one or more chlorophyll a, A1 is one or both phylloquinones and FX is a shared 4Fe-4S iron-sulfur center. is required as a cofactor.

It is found in the plastid. Its subcellular location is the chloroplast thylakoid membrane. It carries out the reaction reduced [plastocyanin] + hnu + oxidized [2Fe-2S]-[ferredoxin] = oxidized [plastocyanin] + reduced [2Fe-2S]-[ferredoxin]. Functionally, psaA and PsaB bind P700, the primary electron donor of photosystem I (PSI), as well as the electron acceptors A0, A1 and FX. PSI is a plastocyanin/cytochrome c6-ferredoxin oxidoreductase, converting photonic excitation into a charge separation, which transfers an electron from the donor P700 chlorophyll pair to the spectroscopically characterized acceptors A0, A1, FX, FA and FB in turn. Oxidized P700 is reduced on the lumenal side of the thylakoid membrane by plastocyanin or cytochrome c6. This Ostreococcus tauri protein is Photosystem I P700 chlorophyll a apoprotein A2.